A 71-amino-acid chain; its full sequence is Conotoxin LvVIB (71 aa).

The signal sequence occupies residues 1 to 17 (VLIIAVLFLTASELVTA). The propeptide occupies 18-41 (DYTRDKWQYRAASLRDAMRNFRDT). Cystine bridges form between Cys43/Cys57, Cys50/Cys62, and Cys56/Cys69.

Belongs to the conotoxin O1 superfamily. Expressed by the venom duct.

Its subcellular location is the secreted. In Conus lividus (Livid cone), this protein is Conotoxin LvVIB.